Reading from the N-terminus, the 1436-residue chain is Antigen WC1.1 (1436 aa).

Residues 1–25 form the signal peptide; the sequence is MALGRHLSLRGLCVLLLGTMVGGQA. SRCR domains are found at residues 28–131, 134–234, and 239–340; these read LRLK…VVCS, VRLA…VVCS, and VRLM…VICS. Cystine bridges form between cysteine 66/cysteine 130 and cysteine 97/cysteine 107. N-linked (GlcNAc...) asparagine glycosylation is present at asparagine 162. Intrachain disulfides connect cysteine 172/cysteine 233 and cysteine 203/cysteine 213. N-linked (GlcNAc...) asparagine glycosylation is found at asparagine 244 and asparagine 256. 3 cysteine pairs are disulfide-bonded: cysteine 265–cysteine 329, cysteine 278–cysteine 339, and cysteine 309–cysteine 319. N-linked (GlcNAc...) asparagine glycans are attached at residues asparagine 351, asparagine 424, and asparagine 444. SRCR domains follow at residues 376 to 476, 481 to 581, 586 to 686, 689 to 789, and 794 to 895; these read LRLV…VICS, LRMV…IWCA, IRLV…VICS, VRLA…VVCS, and VQLM…VICS. Cystine bridges form between cysteine 401–cysteine 465, cysteine 414–cysteine 475, and cysteine 445–cysteine 455. 2 N-linked (GlcNAc...) asparagine glycosylation sites follow: asparagine 499 and asparagine 531. 6 disulfides stabilise this stretch: cysteine 506/cysteine 570, cysteine 519/cysteine 580, cysteine 550/cysteine 560, cysteine 611/cysteine 675, cysteine 624/cysteine 685, and cysteine 655/cysteine 665. A glycan (N-linked (GlcNAc...) asparagine) is linked at asparagine 717. Intrachain disulfides connect cysteine 727–cysteine 788 and cysteine 758–cysteine 768. N-linked (GlcNAc...) asparagine glycosylation occurs at asparagine 799. 3 disulfides stabilise this stretch: cysteine 820/cysteine 884, cysteine 833/cysteine 894, and cysteine 864/cysteine 874. N-linked (GlcNAc...) asparagine glycosylation is found at asparagine 897, asparagine 979, and asparagine 999. SRCR domains are found at residues 931-1031, 1036-1136, and 1155-1255; these read LRLV…VICS, LRMV…ISCE, and LRLR…VRCS. Intrachain disulfides connect cysteine 956–cysteine 1020, cysteine 969–cysteine 1030, and cysteine 1000–cysteine 1010. 2 N-linked (GlcNAc...) asparagine glycosylation sites follow: asparagine 1054 and asparagine 1086. 3 cysteine pairs are disulfide-bonded: cysteine 1061/cysteine 1125, cysteine 1074/cysteine 1135, and cysteine 1105/cysteine 1115. Asparagine 1173 and asparagine 1214 each carry an N-linked (GlcNAc...) asparagine glycan. Disulfide bonds link cysteine 1180–cysteine 1244, cysteine 1193–cysteine 1254, and cysteine 1224–cysteine 1234. The disordered stretch occupies residues 1337–1410; that stretch reads EGLGSPDQMT…PGEGEESFWL (74 aa). Residues 1348 to 1358 are compositionally biased toward acidic residues; the sequence is VPDENYDDAEE. A compositionally biased stretch (polar residues) spans 1384-1393; sequence RSSQTGSFLN. The N-linked (GlcNAc...) asparagine glycan is linked to asparagine 1393.

Expressed on subsets of CD4-CD8- gamma delta T lymphocytes.

It is found in the secreted. The protein is Antigen WC1.1 of Bos taurus (Bovine).